The primary structure comprises 353 residues: Guanine nucleotide-binding protein subunit beta-5 (353 aa).

WD repeat units lie at residues 61–100, 103–142, 151–192, 194–236, 237–276, 278–320, and 323–352; these read GHGNKVLCMDWCKDKRRIVSSSQDGKVIVWDSFTTNKEHA, MPCTWVMACAYAPSGCAIACGGLDNKCSVYPLTFDKNENM, MHTN…QSFH, HGAD…QAFE, THESDVNSVRYYPSGDAFASGSDDATCRLYDLRADREVAI, SKES…RVSI, and GHENRVSTLRVSPDGTAFCSGSWDHTLRVW.

This sequence belongs to the WD repeat G protein beta family. In terms of assembly, component of a complex composed of RGS9 (isoform RGS9-1), GNB5 and RGS9BP; within this complex, the presence of GNB5 stabilizes both itself and RGS9 and increases RGS9 GTPase-activating protein (GAP) activity. Interacts with RGS7, forming the RGS7-GNB5 complex; within this complex, the presence of GNB5 increases RGS7 GTPase-activating protein (GAP) activity. Interacts with GPR158; promotes the GTPase activator activity of the RGS7-GNB5 complex in absence of glycine, in contrast GTPase activator activity of the RGS7-GNB5 complex is inhibited in presence of glycine. Interacts with RGS6. In terms of tissue distribution, detected in brain.

The protein resides in the membrane. In terms of biological role, enhances GTPase-activating protein (GAP) activity of regulator of G protein signaling (RGS) proteins, such as RGS7 and RGS9, hence involved in the termination of the signaling initiated by the G protein coupled receptors (GPCRs) by accelerating the GTP hydrolysis on the G-alpha subunits, thereby promoting their inactivation. Increases RGS7 GTPase-activating protein (GAP) activity, thereby regulating mood and cognition. Increases RGS9 GTPase-activating protein (GAP) activity, hence contributes to the deactivation of G protein signaling initiated by D(2) dopamine receptors. May play an important role in neuronal signaling, including in the parasympathetic, but not sympathetic, control of heart rate. This is Guanine nucleotide-binding protein subunit beta-5 (Gnb5) from Rattus norvegicus (Rat).